Consider the following 593-residue polypeptide: UvrABC system protein C (593 aa).

Residues 14–91 (DSPGCYLHKD…IQENMPKYNI (78 aa)) form the GIY-YIG domain. The 36-residue stretch at 196 to 231 (NKIVNGLTEKMKSAAMTMEFERAAEYRDLIEAISLL) folds into the UVR domain.

The protein belongs to the UvrC family. In terms of assembly, interacts with UvrB in an incision complex.

The protein resides in the cytoplasm. Its function is as follows. The UvrABC repair system catalyzes the recognition and processing of DNA lesions. UvrC both incises the 5' and 3' sides of the lesion. The N-terminal half is responsible for the 3' incision and the C-terminal half is responsible for the 5' incision. This is UvrABC system protein C from Streptococcus agalactiae serotype Ia (strain ATCC 27591 / A909 / CDC SS700).